A 355-amino-acid chain; its full sequence is Elongation factor Ts (355 aa).

Positions 82-85 (TDFV) are involved in Mg(2+) ion dislocation from EF-Tu.

The protein belongs to the EF-Ts family.

The protein localises to the cytoplasm. Associates with the EF-Tu.GDP complex and induces the exchange of GDP to GTP. It remains bound to the aminoacyl-tRNA.EF-Tu.GTP complex up to the GTP hydrolysis stage on the ribosome. This chain is Elongation factor Ts, found in Helicobacter pylori (strain G27).